The sequence spans 360 residues: Peptide chain release factor 1 (360 aa).

Gln-237 is modified (N5-methylglutamine).

It belongs to the prokaryotic/mitochondrial release factor family. In terms of processing, methylated by PrmC. Methylation increases the termination efficiency of RF1.

Its subcellular location is the cytoplasm. In terms of biological role, peptide chain release factor 1 directs the termination of translation in response to the peptide chain termination codons UAG and UAA. The chain is Peptide chain release factor 1 from Nitrosococcus oceani (strain ATCC 19707 / BCRC 17464 / JCM 30415 / NCIMB 11848 / C-107).